The following is a 313-amino-acid chain: Ankyrin repeat family A protein 2 (313 aa).

ANK repeat units follow at residues 148-180 (ANSLSVHQLAAQGEMLYLATRIEQENVINHTDE), 181-213 (EGFTPLMWAAAHGQIAVVEFLLQNGADPQLLGK), 214-246 (GRESALSLACSKGYTDIVKMLLDCGVDVNEYDW), 247-279 (NGGTPLLYAVHGNHVKCVKMLLESGADPTIETD), and 280-313 (SGYNSMDLAVALGYRSVQQVIESHLLKLLQNIKE).

In terms of assembly, interacts (via ANK repeats) with CCDC8 (via PxLPxI/L motif); mediates the interaction with the 3M complex which is composed of CCDC8, CUL7 and OBSL1. Interacts (via ANK repeats) with HDAC4 (via PxLPxI/L motif). Interacts (via ANK repeats) with HDAC5 (via PxLPxI/L motif). Interacts (via ANK repeats) with LRP2/megalin (via PxLPxI/L motif). Interacts (via ANK repeats) with RFX7 (via PxLPxI/L motif). Interacts with AHRR. Interacts with NEK6.

The protein resides in the cytoplasm. Its subcellular location is the cytoskeleton. It localises to the membrane. Functionally, may regulate the interaction between the 3M complex and the histone deacetylases HDAC4 and HDAC5. May also regulate LRP2/megalin. The sequence is that of Ankyrin repeat family A protein 2 (ANKRA2) from Homo sapiens (Human).